Reading from the N-terminus, the 183-residue chain is Small ribosomal subunit protein uS4 (183 aa).

The S4 RNA-binding domain occupies 106–168 (RRLETLVYKK…ETSPFTDENH (63 aa)). The disordered stretch occupies residues 158-183 (NETSPFTDENHPLRMEMSGTKEEENE). Residues 165 to 183 (DENHPLRMEMSGTKEEENE) show a composition bias toward basic and acidic residues.

The protein belongs to the universal ribosomal protein uS4 family. As to quaternary structure, part of the 30S ribosomal subunit. Contacts protein S5. The interaction surface between S4 and S5 is involved in control of translational fidelity.

Functionally, one of the primary rRNA binding proteins, it binds directly to 16S rRNA where it nucleates assembly of the body of the 30S subunit. Its function is as follows. With S5 and S12 plays an important role in translational accuracy. This is Small ribosomal subunit protein uS4 from Picrophilus torridus (strain ATCC 700027 / DSM 9790 / JCM 10055 / NBRC 100828 / KAW 2/3).